A 206-amino-acid polypeptide reads, in one-letter code: Ribonuclease HII (206 aa).

One can recognise an RNase H type-2 domain in the interval 19 to 206 (ALIAGVDEVG…GPVKRALGIE (188 aa)). Positions 25, 26, and 117 each coordinate a divalent metal cation.

It belongs to the RNase HII family. Requires Mn(2+) as cofactor. The cofactor is Mg(2+).

The protein localises to the cytoplasm. The catalysed reaction is Endonucleolytic cleavage to 5'-phosphomonoester.. Its function is as follows. Endonuclease that specifically degrades the RNA of RNA-DNA hybrids. The sequence is that of Ribonuclease HII from Vibrio cholerae serotype O1 (strain M66-2).